The primary structure comprises 73 residues: RNA-binding protein Hfq (73 aa).

The Sm domain occupies 8-68 (DQFLNQIRKE…ISTFAPQKNV (61 aa)).

This sequence belongs to the Hfq family. As to quaternary structure, homohexamer.

In terms of biological role, RNA chaperone that binds small regulatory RNA (sRNAs) and mRNAs to facilitate mRNA translational regulation in response to envelope stress, environmental stress and changes in metabolite concentrations. Also binds with high specificity to tRNAs. The protein is RNA-binding protein Hfq of Bacillus subtilis (strain 168).